The primary structure comprises 124 residues: Large ribosomal subunit protein bL12 (124 aa).

This sequence belongs to the bacterial ribosomal protein bL12 family. In terms of assembly, homodimer. Part of the ribosomal stalk of the 50S ribosomal subunit. Forms a multimeric L10(L12)X complex, where L10 forms an elongated spine to which 2 to 4 L12 dimers bind in a sequential fashion. Binds GTP-bound translation factors.

Its function is as follows. Forms part of the ribosomal stalk which helps the ribosome interact with GTP-bound translation factors. Is thus essential for accurate translation. The sequence is that of Large ribosomal subunit protein bL12 from Burkholderia cenocepacia (strain ATCC BAA-245 / DSM 16553 / LMG 16656 / NCTC 13227 / J2315 / CF5610) (Burkholderia cepacia (strain J2315)).